The following is a 375-amino-acid chain: Guanine nucleotide-binding protein subunit beta (375 aa).

WD repeat units lie at residues Gly63 to Asn93, Leu105 to Asn135, Gly154 to Asp185, Gly202 to Asp233, Gly246 to Asp276, Gly293 to Asp323, and Ser339 to Ala369.

Belongs to the WD repeat G protein beta family. G proteins are composed of 3 units, alpha, beta and gamma.

Guanine nucleotide-binding proteins (G proteins) are involved as a modulator or transducer in various transmembrane signaling systems. The beta and gamma chains are required for the GTPase activity, for replacement of GDP by GTP, and for G protein-effector interaction. This is Guanine nucleotide-binding protein subunit beta from Nicotiana tabacum (Common tobacco).